We begin with the raw amino-acid sequence, 502 residues long: 4,4'-diapophytoene desaturase (4,4'-diaponeurosporene-forming) (502 aa).

5 to 17 (VIGAGVTGLAAAA) serves as a coordination point for FAD.

It belongs to the carotenoid/retinoid oxidoreductase family. CrtN subfamily.

It catalyses the reaction 15-cis-4,4'-diapophytoene + 3 FAD + 3 H(+) = all-trans-4,4'-diaponeurosporene + 3 FADH2. The protein operates within carotenoid biosynthesis; staphyloxanthin biosynthesis; staphyloxanthin from farnesyl diphosphate: step 2/5. Its function is as follows. Involved in the biosynthesis of the yellow-orange carotenoid staphyloxanthin, which plays a role in the virulence via its protective function against oxidative stress. Catalyzes three successive dehydrogenation reactions that lead to the introduction of three double bonds into 4,4'-diapophytoene (dehydrosqualene), with 4,4'-diapophytofluene and 4,4'-diapo-zeta-carotene as intermediates, and 4,4'-diaponeurosporene (the major deep-yellow pigment in staphylococci strains) as the end product. The protein is 4,4'-diapophytoene desaturase (4,4'-diaponeurosporene-forming) of Staphylococcus aureus (strain COL).